A 545-amino-acid chain; its full sequence is Serine/threonine-protein kinase PAK 1 (545 aa).

Residues 1–75 are disordered; it reads MSNNGVDIQD…KKREKERPEI (75 aa). The residue at position 2 (Ser-2) is an N-acetylserine. A Phosphoserine; by PKB and autocatalysis modification is found at Ser-21. Ser-57 carries the post-translational modification Phosphoserine; by autocatalysis. The tract at residues 70–140 is autoregulatory region; sequence KERPEISLPS…YNSKKTSNSK (71 aa). Positions 75–88 constitute a CRIB domain; it reads ISLPSDFEHTIHVG. The interval 75 to 105 is GTPase-binding; sequence ISLPSDFEHTIHVGFDAVTGEFTGMPEQWAR. Thr-84 is modified (phosphothreonine; by OXSR1). Position 115 is a phosphoserine (Ser-115). A phosphotyrosine mark is found at Tyr-131 and Tyr-142. Phosphoserine; by autocatalysis occurs at positions 144 and 149. Positions 150–198 are disordered; sequence AEDYNSSNTLNVKTVSETPAVPPVSEDDEDDDDDATPPPVIAPRPEHTK. The segment covering 152 to 166 has biased composition (polar residues); it reads DYNSSNTLNVKTVSE. A Phosphotyrosine; by JAK2 modification is found at Tyr-153. Ser-174 bears the Phosphoserine mark. Residues 174 to 184 are compositionally biased toward acidic residues; sequence SEDDEDDDDDA. Thr-185 is modified (phosphothreonine). Phosphoserine; by autocatalysis is present on Ser-199. At Tyr-201 the chain carries Phosphotyrosine; by JAK2. Ser-204 carries the post-translational modification Phosphoserine; by autocatalysis. The segment at 210-250 is disordered; it reads PVTPTRDVATSPISPTENNTTPPDALTRNTEKQKKKPKMSD. Residues Thr-212 and Thr-219 each carry the phosphothreonine modification. Ser-220 and Ser-223 each carry phosphoserine. Over residues 220–231 the composition is skewed to polar residues; sequence SPISPTENNTTP. Phosphothreonine occurs at positions 225, 229, and 230. The Protein kinase domain maps to 270-521; it reads YTPFEKIGQG…AKELLQHQFL (252 aa). An ATP-binding site is contributed by 276-284; the sequence is IGQGASGTV. A Phosphotyrosine; by JAK2 modification is found at Tyr-285. An ATP-binding site is contributed by Lys-299. Residue Asp-389 is the Proton acceptor of the active site. Thr-423 carries the phosphothreonine; by autocatalysis, BRSK2 and PDPK1 modification.

Belongs to the protein kinase superfamily. STE Ser/Thr protein kinase family. STE20 subfamily. Homodimer in its autoinhibited state. Active as monomer. Interacts with GIT1. Component of cytoplasmic complexes, which also contains PXN, ARHGEF7 and GIT1. Interacts with NISCH. Interacts with DVL1; mediates the formation of a DVL1, MUSK and PAK1 ternary complex involved in AChR clustering. Binds to the caspase-cleaved p110 isoform of CDC2L1 and CDC2L2, p110C, but not the full-length proteins. Interacts with ARHGEF7. Interacts tightly with GTP-bound but not GDP-bound CDC42/P21 and RAC1. Interacts with SCRIB. Interacts with PDPK1. Interacts (via kinase domain) with RAF1. Interacts with NCK1 and NCK2. Interacts with TBCB. Interacts with BRSK2. Interacts with SNAI1. Interacts with CIB1 (via N-terminal region); the interaction is direct, promotes PAK1 activity and occurs in a calcium-dependent manner. Interacts with INPP5K. Interacts with gamma-tubulin. Interacts with RHOU; the interaction promotes PAK1 activation. The cofactor is Mg(2+). In terms of processing, autophosphorylated in trans, meaning that in a dimer, one kinase molecule phosphorylates the other one. Activated by autophosphorylation at Thr-423 in response to a conformation change, triggered by interaction with GTP-bound CDC42 or RAC1. Activated by phosphorylation at Thr-423 by BRSK2 and by PDPK1. Phosphorylated by JAK2 in response to PRL; this increases PAK1 kinase activity. Phosphorylated at Ser-21 by PKB/AKT; this reduces interaction with NCK1 and association with focal adhesion sites. Upon DNA damage, phosphorylated at Thr-212 and translocates to the nucleoplasm. Phosphorylated at tyrosine residues, which can be enhanced by NTN1.

It localises to the cytoplasm. Its subcellular location is the cell junction. The protein localises to the focal adhesion. It is found in the cell projection. The protein resides in the lamellipodium. It localises to the cell membrane. Its subcellular location is the ruffle membrane. The protein localises to the invadopodium. It is found in the nucleus. The protein resides in the nucleoplasm. It localises to the chromosome. Its subcellular location is the cytoskeleton. The protein localises to the microtubule organizing center. It is found in the centrosome. It carries out the reaction L-seryl-[protein] + ATP = O-phospho-L-seryl-[protein] + ADP + H(+). The enzyme catalyses L-threonyl-[protein] + ATP = O-phospho-L-threonyl-[protein] + ADP + H(+). Its activity is regulated as follows. Phosphorylation of Thr-84 by OXSR1 inhibits activation. Activated by binding small G proteins. Binding of GTP-bound CDC42 or RAC1 to the autoregulatory region releases monomers from the autoinhibited dimer, and enables activation by phosphorylation of Thr-423. Functionally, protein kinase involved in intracellular signaling pathways downstream of integrins and receptor-type kinases that plays an important role in cytoskeleton dynamics, in cell adhesion, migration, proliferation, apoptosis, mitosis, and in vesicle-mediated transport processes. Can directly phosphorylate BAD and protects cells against apoptosis. Activated by interaction with CDC42 and RAC1. Functions as a GTPase effector that links the Rho-related GTPases CDC42 and RAC1 to the JNK MAP kinase pathway. Phosphorylates and activates MAP2K1, and thereby mediates activation of downstream MAP kinases. Involved in the reorganization of the actin cytoskeleton, actin stress fibers and of focal adhesion complexes. Phosphorylates the tubulin chaperone TBCB and thereby plays a role in the regulation of microtubule biogenesis and organization of the tubulin cytoskeleton. Plays a role in the regulation of insulin secretion in response to elevated glucose levels. Part of a ternary complex that contains PAK1, DVL1 and MUSK that is important for MUSK-dependent regulation of AChR clustering during the formation of the neuromuscular junction (NMJ). Activity is inhibited in cells undergoing apoptosis, potentially due to binding of CDC2L1 and CDC2L2. Phosphorylates MYL9/MLC2. Phosphorylates RAF1 at 'Ser-338' and 'Ser-339' resulting in: activation of RAF1, stimulation of RAF1 translocation to mitochondria, phosphorylation of BAD by RAF1, and RAF1 binding to BCL2. Phosphorylates SNAI1 at 'Ser-246' promoting its transcriptional repressor activity by increasing its accumulation in the nucleus. In podocytes, promotes NR3C2 nuclear localization. Required for atypical chemokine receptor ACKR2-induced phosphorylation of LIMK1 and cofilin (CFL1) and for the up-regulation of ACKR2 from endosomal compartment to cell membrane, increasing its efficiency in chemokine uptake and degradation. In synapses, seems to mediate the regulation of F-actin cluster formation performed by SHANK3, maybe through CFL1 phosphorylation and inactivation. Plays a role in RUFY3-mediated facilitating gastric cancer cells migration and invasion. In response to DNA damage, phosphorylates MORC2 which activates its ATPase activity and facilitates chromatin remodeling. In neurons, plays a crucial role in regulating GABA(A) receptor synaptic stability and hence GABAergic inhibitory synaptic transmission through its role in F-actin stabilization. In hippocampal neurons, necessary for the formation of dendritic spines and excitatory synapses; this function is dependent on kinase activity and may be exerted by the regulation of actomyosin contractility through the phosphorylation of myosin II regulatory light chain (MLC). Along with GIT1, positively regulates microtubule nucleation during interphase. Phosphorylates FXR1, promoting its localization to stress granules and activity. Phosphorylates ILK on 'Thr-173' and 'Ser-246', promoting nuclear export of ILK. This Mus musculus (Mouse) protein is Serine/threonine-protein kinase PAK 1.